We begin with the raw amino-acid sequence, 916 residues long: Translation initiation factor IF-2 (916 aa).

Residues 151–191 are compositionally biased toward basic and acidic residues; it reads NLDEQQRLAESDRARDEAIQRKRDEEQAAKDRVEAERKAAE. 2 disordered regions span residues 151–262 and 280–328; these read NLDE…SHVM and HLSA…ERPT. Low complexity-rich tracts occupy residues 192 to 243 and 293 to 305; these read EAAA…ATPA and RGKPTGRPGSSSS. A tr-type G domain is found at 415–584; sequence SRPPVVTIMG…SLQAEVLELK (170 aa). Residues 424-431 are G1; the sequence is GHVDHGKT. Position 424–431 (424–431) interacts with GTP; that stretch reads GHVDHGKT. Residues 449–453 are G2; the sequence is GITQH. The segment at 470 to 473 is G3; sequence DTPG. GTP is bound by residues 470 to 474 and 524 to 527; these read DTPGH and NKID. Residues 524–527 are G4; the sequence is NKID. Residues 560–562 form a G5 region; it reads SAK.

Belongs to the TRAFAC class translation factor GTPase superfamily. Classic translation factor GTPase family. IF-2 subfamily.

The protein resides in the cytoplasm. In terms of biological role, one of the essential components for the initiation of protein synthesis. Protects formylmethionyl-tRNA from spontaneous hydrolysis and promotes its binding to the 30S ribosomal subunits. Also involved in the hydrolysis of GTP during the formation of the 70S ribosomal complex. In Xanthomonas campestris pv. campestris (strain B100), this protein is Translation initiation factor IF-2.